The sequence spans 334 residues: Glycerol-3-phosphate dehydrogenase [NAD(P)+] (334 aa).

4 residues coordinate NADPH: S14, Y15, H35, and K109. Sn-glycerol 3-phosphate contacts are provided by K109, G138, and T140. An NADPH-binding site is contributed by A142. Sn-glycerol 3-phosphate-binding residues include K194, D247, S257, R258, and N259. Residue K194 is the Proton acceptor of the active site. R258 is an NADPH binding site. The NADPH site is built by V282 and E284.

Belongs to the NAD-dependent glycerol-3-phosphate dehydrogenase family.

It localises to the cytoplasm. It carries out the reaction sn-glycerol 3-phosphate + NAD(+) = dihydroxyacetone phosphate + NADH + H(+). It catalyses the reaction sn-glycerol 3-phosphate + NADP(+) = dihydroxyacetone phosphate + NADPH + H(+). The protein operates within membrane lipid metabolism; glycerophospholipid metabolism. Functionally, catalyzes the reduction of the glycolytic intermediate dihydroxyacetone phosphate (DHAP) to sn-glycerol 3-phosphate (G3P), the key precursor for phospholipid synthesis. This chain is Glycerol-3-phosphate dehydrogenase [NAD(P)+], found in Aeromonas salmonicida (strain A449).